The sequence spans 493 residues: MEHKEIVIGVDIGSRKICAIVAEFKDGILRIIGTAHQDSKEINSKAIKRGRINSLAHASNAIKEVINSAKKMAGLNADEDRNNPISSFRESYHPKTKAIVSFSGAYTESIRDVTGVASTKDNVVTIDEINRAINNACAKAGLDNDKHILHALPYRFTLDKQEVNDPLGMSGTRLEVFIHIVYTEKNNIENLEKIMIQSGVEIENIVINSYAASIATLSNDERELGVACVDMGGETCNLTIYSGNSIRYNKYLPVGSHHLTTDLSHMLNTPFPYAEEVKIKYGDLSFESGAETPSQSVQIPTTGSDGHESHIVPLSEIQTIMRERALETFKIIHRSIQDSGFEEHLGGGVVLTGGMALMKGIKELARTHFTNYPVRLATPVEKYNIMGMFEDLKDPRFSVVVGLILYKAGGHTNYERDSKGIIRYHESDDYIRKAHQSNPTPHIHSSPTERNLSDLKTPSAPLNTAKNDDFLPIKPTEQKGFFQNLLDKISKIF.

The disordered stretch occupies residues 434-468 (AHQSNPTPHIHSSPTERNLSDLKTPSAPLNTAKND). The span at 436–465 (QSNPTPHIHSSPTERNLSDLKTPSAPLNTA) shows a compositional bias: polar residues.

The protein belongs to the FtsA/MreB family. In terms of assembly, self-interacts. Interacts with FtsZ.

Its subcellular location is the cell inner membrane. In terms of biological role, cell division protein that is involved in the assembly of the Z ring. May serve as a membrane anchor for the Z ring. This chain is Cell division protein FtsA, found in Helicobacter pylori (strain J99 / ATCC 700824) (Campylobacter pylori J99).